Consider the following 429-residue polypeptide: Carbamoyl phosphate synthase arginine-specific small chain (429 aa).

Residues 1–20 constitute a mitochondrion transit peptide; sequence MIRVIQPPLIASKQLFRRYL. In terms of domain architecture, Glutamine amidotransferase type-1 spans 218–406; the sequence is HIAVLDCGAK…FENIEQYRAT (189 aa). Cysteine 295 (nucleophile) is an active-site residue. Active-site residues include histidine 379 and glutamate 381.

This sequence belongs to the CarA family. In terms of assembly, heterodimer composed of 2 chains; the small (or glutamine) chain promotes the hydrolysis of glutamine to ammonia, which is used by the large (or ammonia) chain to synthesize carbamoyl phosphate.

The protein resides in the mitochondrion matrix. It catalyses the reaction hydrogencarbonate + L-glutamine + 2 ATP + H2O = carbamoyl phosphate + L-glutamate + 2 ADP + phosphate + 2 H(+). The catalysed reaction is L-glutamine + H2O = L-glutamate + NH4(+). Its pathway is amino-acid biosynthesis; L-arginine biosynthesis; carbamoyl phosphate from bicarbonate: step 1/1. Small subunit of the arginine-specific carbamoyl phosphate synthase (CPSase). CPSase catalyzes the formation of carbamoyl phosphate from the ammonia moiety of glutamine, carbonate, and phosphate donated by ATP, the first step of the arginine biosynthetic pathway. The small subunit (glutamine amidotransferase) binds and cleaves glutamine to supply the large subunit with the substrate ammonia. This chain is Carbamoyl phosphate synthase arginine-specific small chain (CPA1), found in Debaryomyces hansenii (strain ATCC 36239 / CBS 767 / BCRC 21394 / JCM 1990 / NBRC 0083 / IGC 2968) (Yeast).